The sequence spans 187 residues: ATP synthase subunit b 2 (187 aa).

A helical transmembrane segment spans residues 32–52 (TTFAAQILWLAIAFGLLYYLM).

Belongs to the ATPase B chain family. F-type ATPases have 2 components, F(1) - the catalytic core - and F(0) - the membrane proton channel. F(1) has five subunits: alpha(3), beta(3), gamma(1), delta(1), epsilon(1). F(0) has three main subunits: a(1), b(2) and c(10-14). The alpha and beta chains form an alternating ring which encloses part of the gamma chain. F(1) is attached to F(0) by a central stalk formed by the gamma and epsilon chains, while a peripheral stalk is formed by the delta and b chains.

The protein localises to the cell inner membrane. Functionally, f(1)F(0) ATP synthase produces ATP from ADP in the presence of a proton or sodium gradient. F-type ATPases consist of two structural domains, F(1) containing the extramembraneous catalytic core and F(0) containing the membrane proton channel, linked together by a central stalk and a peripheral stalk. During catalysis, ATP synthesis in the catalytic domain of F(1) is coupled via a rotary mechanism of the central stalk subunits to proton translocation. In terms of biological role, component of the F(0) channel, it forms part of the peripheral stalk, linking F(1) to F(0). The b'-subunit is a diverged and duplicated form of b found in plants and photosynthetic bacteria. The chain is ATP synthase subunit b 2 (atpF2) from Methylobacterium sp. (strain 4-46).